Consider the following 329-residue polypeptide: Cytochrome f (329 aa).

The N-terminal stretch at 1-44 (MKRNIIFLVIHQFENLTMKKKQNIFFIFLLTVFFNFTVNSNVSA) is a signal peptide. Heme is bound by residues Tyr45, Cys65, Cys68, and His69. A helical transmembrane segment spans residues 295–315 (VQGLIIFLITIFITQLFLVLK).

The protein belongs to the cytochrome f family. The 4 large subunits of the cytochrome b6-f complex are cytochrome b6, subunit IV (17 kDa polypeptide, petD), cytochrome f and the Rieske protein, while the 4 small subunits are PetG, PetL, PetM and PetN. The complex functions as a dimer. The cofactor is heme.

It localises to the plastid. Its subcellular location is the chloroplast thylakoid membrane. Component of the cytochrome b6-f complex, which mediates electron transfer between photosystem II (PSII) and photosystem I (PSI), cyclic electron flow around PSI, and state transitions. The polypeptide is Cytochrome f (Tupiella akineta (Green alga)).